The chain runs to 282 residues: Phosphatidylserine decarboxylase proenzyme (282 aa).

Catalysis depends on charge relay system; for autoendoproteolytic cleavage activity residues Asp-88, His-144, and Ser-247. The active-site Schiff-base intermediate with substrate; via pyruvic acid; for decarboxylase activity is the Ser-247. Ser-247 carries the pyruvic acid (Ser); by autocatalysis modification.

It belongs to the phosphatidylserine decarboxylase family. PSD-B subfamily. Prokaryotic type I sub-subfamily. As to quaternary structure, heterodimer of a large membrane-associated beta subunit and a small pyruvoyl-containing alpha subunit. Pyruvate serves as cofactor. Post-translationally, is synthesized initially as an inactive proenzyme. Formation of the active enzyme involves a self-maturation process in which the active site pyruvoyl group is generated from an internal serine residue via an autocatalytic post-translational modification. Two non-identical subunits are generated from the proenzyme in this reaction, and the pyruvate is formed at the N-terminus of the alpha chain, which is derived from the carboxyl end of the proenzyme. The autoendoproteolytic cleavage occurs by a canonical serine protease mechanism, in which the side chain hydroxyl group of the serine supplies its oxygen atom to form the C-terminus of the beta chain, while the remainder of the serine residue undergoes an oxidative deamination to produce ammonia and the pyruvoyl prosthetic group on the alpha chain. During this reaction, the Ser that is part of the protease active site of the proenzyme becomes the pyruvoyl prosthetic group, which constitutes an essential element of the active site of the mature decarboxylase.

It localises to the cell membrane. The enzyme catalyses a 1,2-diacyl-sn-glycero-3-phospho-L-serine + H(+) = a 1,2-diacyl-sn-glycero-3-phosphoethanolamine + CO2. Its pathway is phospholipid metabolism; phosphatidylethanolamine biosynthesis; phosphatidylethanolamine from CDP-diacylglycerol: step 2/2. Its function is as follows. Catalyzes the formation of phosphatidylethanolamine (PtdEtn) from phosphatidylserine (PtdSer). This is Phosphatidylserine decarboxylase proenzyme from Xanthomonas campestris pv. campestris (strain 8004).